We begin with the raw amino-acid sequence, 779 residues long: DNA topoisomerase 1 (779 aa).

The Toprim domain maps to 1–111 (MKLVIVESPA…VESDDFFKRV (111 aa)). Residues Glu-7 and Asp-80 each contribute to the Mg(2+) site. In terms of domain architecture, Topo IA-type catalytic spans 132-568 (DTNLVNAQQA…FWSGFNNNIE (437 aa)). Positions 166 to 171 (SAGRVQ) are interaction with DNA. Tyr-304 serves as the catalytic O-(5'-phospho-DNA)-tyrosine intermediate. The segment at 600-627 (CPSCKTGQLSLKLGKFGAFLACSNYPEC) adopts a C4-type zinc-finger fold.

This sequence belongs to the type IA topoisomerase family. Monomer. It depends on Mg(2+) as a cofactor.

The catalysed reaction is ATP-independent breakage of single-stranded DNA, followed by passage and rejoining.. Releases the supercoiling and torsional tension of DNA, which is introduced during the DNA replication and transcription, by transiently cleaving and rejoining one strand of the DNA duplex. Introduces a single-strand break via transesterification at a target site in duplex DNA. The scissile phosphodiester is attacked by the catalytic tyrosine of the enzyme, resulting in the formation of a DNA-(5'-phosphotyrosyl)-enzyme intermediate and the expulsion of a 3'-OH DNA strand. The free DNA strand then undergoes passage around the unbroken strand, thus removing DNA supercoils. Finally, in the religation step, the DNA 3'-OH attacks the covalent intermediate to expel the active-site tyrosine and restore the DNA phosphodiester backbone. The polypeptide is DNA topoisomerase 1 (Rickettsia typhi (strain ATCC VR-144 / Wilmington)).